The chain runs to 1291 residues: Ethylene-insensitive protein 2.2 (1291 aa).

Transmembrane regions (helical) follow at residues 18 to 38, 48 to 68, 96 to 116, 128 to 148, 155 to 175, and 195 to 215; these read ALPA…PGKW, FGFD…LCQY, FLGV…ILGI, LSTC…FATL, SFLS…GVLI, and SAFA…FFLH. Asparagine 227 is a glycosylation site (N-linked (GlcNAc...) asparagine). Transmembrane regions (helical) follow at residues 231–251, 253–273, 288–308, 335–355, 356–376, 393–413, and 441–461; these read GALC…IYLV, YVLM…LLTF, VALC…ALTW, IIAV…GIYQ, LLIF…IPLF, FLEF…IIFV, and VLLI…ATPL. The disordered stretch occupies residues 498-518; it reads TEEESIGGQEQLSGPGKSAES. The N-linked (GlcNAc...) asparagine glycan is linked to asparagine 550. A disordered region spans residues 614 to 662; the sequence is AEKEDDEGDSWEPEESSKGVPGSTSSLTSDGPGSFRSLSGKSDEGGNGA. Residues 617–627 are compositionally biased toward acidic residues; it reads EDDEGDSWEPE. Residues 635-653 show a composition bias toward polar residues; sequence GSTSSLTSDGPGSFRSLSG. Serine 647 and serine 664 each carry phosphoserine. Disordered stretches follow at residues 742–768 and 787–808; these read QIHS…GGQR and GPSR…TLPS. The span at 759–768 shows a compositional bias: polar residues; it reads NIDSSYGGQR. Residue threonine 818 is modified to Phosphothreonine. A disordered region spans residues 836–856; it reads GSSSLNGQMDSPAPISPSLGP. Residue asparagine 891 is glycosylated (N-linked (GlcNAc...) asparagine). The residue at position 923 (serine 923) is a Phosphoserine. Asparagine 1027 carries N-linked (GlcNAc...) asparagine glycosylation. The interval 1210-1229 is disordered; sequence HRSSPPVSNGMLPPASKPGR. Positions 1262–1269 match the Nuclear localization signal motif; the sequence is DVAFPKGK.

The protein belongs to the NRAMP (TC 2.A.55) family.

Its subcellular location is the endoplasmic reticulum membrane. The protein resides in the nucleus. It localises to the cytoplasm. Central factor in signaling pathways regulated by ethylene (ET) and involved in various processes including development, plant defense, senescence, nucleotide sugar flux, and tropisms. Functionally, trafficking signal inducing ethylene response. The nuclear localization is both necessary and sufficient to activate EIN3-mediated transcription and ethylene responses. The chain is Ethylene-insensitive protein 2.2 from Populus trichocarpa (Western balsam poplar).